The following is a 212-amino-acid chain: Orotate phosphoribosyltransferase (212 aa).

5-phospho-alpha-D-ribose 1-diphosphate contacts are provided by residues R97, K101, H103, and 123-131 (EDLISTGGS). S127 contributes to the orotate binding site.

This sequence belongs to the purine/pyrimidine phosphoribosyltransferase family. PyrE subfamily. As to quaternary structure, homodimer. Mg(2+) is required as a cofactor.

It carries out the reaction orotidine 5'-phosphate + diphosphate = orotate + 5-phospho-alpha-D-ribose 1-diphosphate. It participates in pyrimidine metabolism; UMP biosynthesis via de novo pathway; UMP from orotate: step 1/2. In terms of biological role, catalyzes the transfer of a ribosyl phosphate group from 5-phosphoribose 1-diphosphate to orotate, leading to the formation of orotidine monophosphate (OMP). This Phocaeicola vulgatus (strain ATCC 8482 / DSM 1447 / JCM 5826 / CCUG 4940 / NBRC 14291 / NCTC 11154) (Bacteroides vulgatus) protein is Orotate phosphoribosyltransferase.